The following is a 57-amino-acid chain: Large ribosomal subunit protein eL20 (57 aa).

Belongs to the eukaryotic ribosomal protein eL20 family. In terms of assembly, part of the 50S ribosomal subunit. Binds 23S rRNA.

The chain is Large ribosomal subunit protein eL20 from Halorhabdus utahensis (strain DSM 12940 / JCM 11049 / AX-2).